Consider the following 63-residue polypeptide: 2-hydroxymuconate tautomerase (63 aa).

Residue P2 is the Proton acceptor; via imino nitrogen of the active site.

The protein belongs to the 4-oxalocrotonate tautomerase family. As to quaternary structure, homohexamer.

It catalyses the reaction (2Z,4E)-2-hydroxyhexa-2,4-dienedioate = (3E)-2-oxohex-3-enedioate. Its pathway is xenobiotic degradation; toluene degradation. It participates in xenobiotic degradation; xylene degradation. Functionally, catalyzes the ketonization of 2-hydroxymuconate stereoselectively to yield 2-oxo-3-hexenedioate. The polypeptide is 2-hydroxymuconate tautomerase (xylH) (Pseudomonas putida (Arthrobacter siderocapsulatus)).